Here is an 872-residue protein sequence, read N- to C-terminus: Telomerase component p95 (872 aa).

Disordered regions lie at residues 55-75 (NQDQ…NSNK) and 471-492 (KNNK…ESTS). Residues 474–486 (KNQEETPETKDET) are compositionally biased toward basic and acidic residues.

In terms of assembly, telomerase consist of two subunit, p80 and p95 that form a 1:1:1 complex with the 159 nt telomerase RNA.

The protein resides in the nucleus. It localises to the chromosome. Its subcellular location is the telomere. The catalysed reaction is DNA(n) + a 2'-deoxyribonucleoside 5'-triphosphate = DNA(n+1) + diphosphate. Functionally, ribonucleoprotein DNA polymerase that catalyzes the de novo synthesis of telomeric simple sequence repeats. Subunit p95 contains some or all of the template-independent primer DNA-binding site termed the anchor site. This chain is Telomerase component p95, found in Tetrahymena thermophila.